A 408-amino-acid chain; its full sequence is UDP-N-acetylglucosamine--dolichyl-phosphate N-acetylglucosaminephosphotransferase (408 aa).

At M1 to P10 the chain is on the lumenal side. The chain crosses the membrane as a helical span at residues L11–A38. Over A39–Q58 the chain is Cytoplasmic. Residues Q44–L46 and E56 each bind UDP-N-acetyl-alpha-D-glucosamine. L46 lines the tunicamycin A1 pocket. A helical transmembrane segment spans residues G59 to F78. At L79–P91 the chain is on the lumenal side. The helical transmembrane segment at H92–L118 threads the bilayer. A tunicamycin A1-binding site is contributed by N119. Residues N119–R121 lie on the Cytoplasmic side of the membrane. Residues W122–N143 form a helical membrane-spanning segment. K125 serves as a coordination point for dolichyl phosphate. Residues F144–G166 lie on the Lumenal side of the membrane. A glycan (N-linked (GlcNAc...) asparagine) is linked at N146. A helical transmembrane segment spans residues I167–I186. A dolichyl phosphate-binding site is contributed by V178 to I186. Position 185 (N185) interacts with tunicamycin A1. Residue N185 participates in Mg(2+) binding. The Cytoplasmic segment spans residues L187 to G192. N191 is a UDP-N-acetyl-alpha-D-glucosamine binding site. A helical transmembrane segment spans residues L193–L213. Residues E214–R218 lie on the Lumenal side of the membrane. A helical transmembrane segment spans residues D219–N242. The Cytoplasmic portion of the chain corresponds to W243 to V250. Residues G251–G269 form a helical membrane-spanning segment. Residue D252 coordinates tunicamycin A1. D252 contributes to the Mg(2+) binding site. Residues H270 to F271 lie on the Lumenal side of the membrane. The helical transmembrane segment at S272 to L293 threads the bilayer. The Cytoplasmic segment spans residues L294–H375. R301–R303 provides a ligand contact to UDP-N-acetyl-alpha-D-glucosamine. Tunicamycin A1 is bound at residue R303. The helical transmembrane segment at E376–Q400 threads the bilayer. At L401 to V408 the chain is on the lumenal side.

This sequence belongs to the glycosyltransferase 4 family. In terms of assembly, homodimer. Mg(2+) serves as cofactor.

Its subcellular location is the endoplasmic reticulum membrane. It catalyses the reaction a di-trans,poly-cis-dolichyl phosphate + UDP-N-acetyl-alpha-D-glucosamine = an N-acetyl-alpha-D-glucosaminyl-diphospho-di-trans,poly-cis-dolichol + UMP. The protein operates within protein modification; protein glycosylation. With respect to regulation, inhibited by natural nucleoside antibiotic tunicamycin, which acts as a structural analog and competitor of UDP-GlcNAc. Activated by mannosylphosphoryldolichol and phospholipids such as phosphatidylglycerol and phosphatidylcholine. In terms of biological role, UDP-N-acetylglucosamine--dolichyl-phosphate N-acetylglucosaminephosphotransferase that operates in the biosynthetic pathway of dolichol-linked oligosaccharides, the glycan precursors employed in protein asparagine (N)-glycosylation. The assembly of dolichol-linked oligosaccharides begins on the cytosolic side of the endoplasmic reticulum membrane and finishes in its lumen. The sequential addition of sugars to dolichol pyrophosphate produces dolichol-linked oligosaccharides containing fourteen sugars, including two GlcNAcs, nine mannoses and three glucoses. Once assembled, the oligosaccharide is transferred from the lipid to nascent proteins by oligosaccharyltransferases. Catalyzes the initial step of dolichol-linked oligosaccharide biosynthesis, transfering GlcNAc-1-P from cytosolic UDP-GlcNAc onto the carrier lipid dolichyl phosphate (P-dolichol), yielding GlcNAc-P-P-dolichol embedded in the cytoplasmic leaflet of the endoplasmic reticulum membrane. In Homo sapiens (Human), this protein is UDP-N-acetylglucosamine--dolichyl-phosphate N-acetylglucosaminephosphotransferase.